Consider the following 267-residue polypeptide: 4-hydroxy-tetrahydrodipicolinate reductase (267 aa).

Residues 8–13 (GAAGRM) and glutamate 34 each bind NAD(+). An NADP(+)-binding site is contributed by arginine 35. NAD(+) is bound by residues 98–100 (GST) and 122–125 (APNM). Histidine 155 serves as the catalytic Proton donor/acceptor. Histidine 156 is a binding site for (S)-2,3,4,5-tetrahydrodipicolinate. Lysine 159 acts as the Proton donor in catalysis. Residue 165–166 (GT) participates in (S)-2,3,4,5-tetrahydrodipicolinate binding.

Belongs to the DapB family.

It localises to the cytoplasm. It catalyses the reaction (S)-2,3,4,5-tetrahydrodipicolinate + NAD(+) + H2O = (2S,4S)-4-hydroxy-2,3,4,5-tetrahydrodipicolinate + NADH + H(+). The catalysed reaction is (S)-2,3,4,5-tetrahydrodipicolinate + NADP(+) + H2O = (2S,4S)-4-hydroxy-2,3,4,5-tetrahydrodipicolinate + NADPH + H(+). Its pathway is amino-acid biosynthesis; L-lysine biosynthesis via DAP pathway; (S)-tetrahydrodipicolinate from L-aspartate: step 4/4. Catalyzes the conversion of 4-hydroxy-tetrahydrodipicolinate (HTPA) to tetrahydrodipicolinate. The chain is 4-hydroxy-tetrahydrodipicolinate reductase from Pelobacter propionicus (strain DSM 2379 / NBRC 103807 / OttBd1).